The sequence spans 264 residues: 3-methyl-2-oxobutanoate hydroxymethyltransferase (264 aa).

2 residues coordinate Mg(2+): Asp45 and Asp84. 3-methyl-2-oxobutanoate is bound by residues 45–46 (DS), Asp84, and Lys112. Position 114 (Glu114) interacts with Mg(2+). Glu181 serves as the catalytic Proton acceptor.

Belongs to the PanB family. As to quaternary structure, homodecamer; pentamer of dimers. The cofactor is Mg(2+).

The protein resides in the cytoplasm. It carries out the reaction 3-methyl-2-oxobutanoate + (6R)-5,10-methylene-5,6,7,8-tetrahydrofolate + H2O = 2-dehydropantoate + (6S)-5,6,7,8-tetrahydrofolate. It functions in the pathway cofactor biosynthesis; (R)-pantothenate biosynthesis; (R)-pantoate from 3-methyl-2-oxobutanoate: step 1/2. Its function is as follows. Catalyzes the reversible reaction in which hydroxymethyl group from 5,10-methylenetetrahydrofolate is transferred onto alpha-ketoisovalerate to form ketopantoate. This is 3-methyl-2-oxobutanoate hydroxymethyltransferase from Cronobacter sakazakii (strain ATCC BAA-894) (Enterobacter sakazakii).